We begin with the raw amino-acid sequence, 351 residues long: Dihydroorotate dehydrogenase (quinone) (351 aa).

FMN is bound by residues 61-65 (AGLDK) and Thr-85. Substrate is bound at residue Lys-65. 110 to 114 (NRMGF) provides a ligand contact to substrate. The FMN site is built by Asn-139 and Asn-172. Asn-172 is a substrate binding site. Catalysis depends on Ser-175, which acts as the Nucleophile. A substrate-binding site is contributed by Asn-177. FMN contacts are provided by Lys-217 and Thr-245. 246–247 (NT) is a substrate binding site. Residues Gly-268, Gly-297, and 318–319 (YT) each bind FMN.

It belongs to the dihydroorotate dehydrogenase family. Type 2 subfamily. As to quaternary structure, monomer. Requires FMN as cofactor.

Its subcellular location is the cell membrane. The catalysed reaction is (S)-dihydroorotate + a quinone = orotate + a quinol. Its pathway is pyrimidine metabolism; UMP biosynthesis via de novo pathway; orotate from (S)-dihydroorotate (quinone route): step 1/1. Functionally, catalyzes the conversion of dihydroorotate to orotate with quinone as electron acceptor. The protein is Dihydroorotate dehydrogenase (quinone) of Xylella fastidiosa (strain 9a5c).